Reading from the N-terminus, the 554-residue chain is Phenylalanine--tRNA ligase beta subunit (554 aa).

The 76-residue stretch at 276-351 folds into the B5 domain; the sequence is LSLKSRMISV…INYGYEKFEG (76 aa). 4 residues coordinate Mg(2+): aspartate 329, aspartate 335, glutamate 338, and glutamate 339.

This sequence belongs to the phenylalanyl-tRNA synthetase beta subunit family. Type 2 subfamily. Tetramer of two alpha and two beta subunits. Requires Mg(2+) as cofactor.

The protein resides in the cytoplasm. The enzyme catalyses tRNA(Phe) + L-phenylalanine + ATP = L-phenylalanyl-tRNA(Phe) + AMP + diphosphate + H(+). This Methanococcus maripaludis (strain C5 / ATCC BAA-1333) protein is Phenylalanine--tRNA ligase beta subunit.